We begin with the raw amino-acid sequence, 452 residues long: L-seryl-tRNA(Sec) selenium transferase (452 aa).

Lysine 285 carries the post-translational modification N6-(pyridoxal phosphate)lysine.

Belongs to the SelA family. Requires pyridoxal 5'-phosphate as cofactor.

It localises to the cytoplasm. It catalyses the reaction L-seryl-tRNA(Sec) + selenophosphate + H(+) = L-selenocysteinyl-tRNA(Sec) + phosphate. It participates in aminoacyl-tRNA biosynthesis; selenocysteinyl-tRNA(Sec) biosynthesis; selenocysteinyl-tRNA(Sec) from L-seryl-tRNA(Sec) (bacterial route): step 1/1. Converts seryl-tRNA(Sec) to selenocysteinyl-tRNA(Sec) required for selenoprotein biosynthesis. The chain is L-seryl-tRNA(Sec) selenium transferase from Aquifex aeolicus (strain VF5).